The following is a 54-amino-acid chain: Zinc-containing ferredoxin A (54 aa).

A disordered region spans residues 1-21 (GIDPNYRTSRPEVGTHEGHKV). Residues 1–36 (GIDPNYRTSRPEVGTHEGHKVYGPVENPKVLGIHGA) are N-terminal extension. Positions 9 to 20 (SRPEVGTHEGHK) are enriched in basic and acidic residues. His16 and His19 together coordinate Zn(2+). N6-methyllysine is present on Lys29. Position 34 (His34) interacts with Zn(2+). Positions 35–54 (GAIVGVDFDLCIADGSCINA) constitute a 4Fe-4S ferredoxin-type 1 domain. 2 residues coordinate [3Fe-4S] cluster: Cys45 and Cys51.

Requires [3Fe-4S] cluster as cofactor. [4Fe-4S] cluster serves as cofactor. Zn(2+) is required as a cofactor.

Ferredoxins are iron-sulfur proteins that transfer electrons in a wide variety of metabolic reactions. The polypeptide is Zinc-containing ferredoxin A (zfx) (Sulfuracidifex metallicus (Sulfolobus metallicus)).